We begin with the raw amino-acid sequence, 100 residues long: uncharacterized protein (100 aa).

This is an uncharacterized protein from Caenorhabditis elegans.